The sequence spans 136 residues: Large ribosomal subunit protein uL16 (136 aa).

Belongs to the universal ribosomal protein uL16 family. Part of the 50S ribosomal subunit.

Binds 23S rRNA and is also seen to make contacts with the A and possibly P site tRNAs. This chain is Large ribosomal subunit protein uL16, found in Sodalis glossinidius (strain morsitans).